Reading from the N-terminus, the 447-residue chain is Argininosuccinate synthase (447 aa).

Residues 20-28 (AFSGGLDTS) and alanine 46 contribute to the ATP site. An L-citrulline-binding site is contributed by tyrosine 102. 2 residues coordinate ATP: glycine 132 and threonine 134. Threonine 134, asparagine 138, and aspartate 139 together coordinate L-aspartate. An L-citrulline-binding site is contributed by asparagine 138. Position 139 (aspartate 139) interacts with ATP. L-citrulline is bound by residues arginine 142 and serine 195. Aspartate 197 contributes to the ATP binding site. Residues threonine 204, glutamate 206, and glutamate 283 each contribute to the L-citrulline site.

This sequence belongs to the argininosuccinate synthase family. Type 2 subfamily. Homotetramer.

The protein localises to the cytoplasm. The enzyme catalyses L-citrulline + L-aspartate + ATP = 2-(N(omega)-L-arginino)succinate + AMP + diphosphate + H(+). It participates in amino-acid biosynthesis; L-arginine biosynthesis; L-arginine from L-ornithine and carbamoyl phosphate: step 2/3. The sequence is that of Argininosuccinate synthase from Neisseria meningitidis serogroup C (strain 053442).